We begin with the raw amino-acid sequence, 569 residues long: MATDIATKELHKPVDVAEYLFRRLYEVGVRAVHGVPGDYNLAALDYLPKCGLHWVGNCNELNAGYAADGYARINGISALVTTFGVGELSALNAIAGAYSEFVPIVHIVGQPHTRSQRDGMLLHHTLGNGDFNVFAKMSGGISCAMGRLNETHEVATLIDNAIRECWLRSRPVYIGLPTDIIVKKIEGQRLDTPLDLSLPPNDPEKEDYVVDVVLKYLHAAKNPVILVDACAIRHRVLDEVHDLMETSGLPTFVAPMGKGAVDETRKNYGGVYAGTGSNPGVREQVESSDLILSIGAIKSDFNTTGFSYRIGQLNTIDFHSTYVRVRYSEYPDINMKGVLRKVVQRMGHVNALPVQRLSNALPDNEKGSSSQEITHAWLWPIVGQWLKERDIVITETGTANFGIWDTRFPANVTAISQVLWGSIGYSVGACQGAALAAKEQNNRRTVLFVGDGSLQLTVQEISTMIRNNLNPIVFVICNQGYTIERFIHGWDEAYNDIQPWDIKGLPVVFGAKDKYKGYRVKTRDELTKLFANDEFNSVPCLQLVELHMPRDDAPASLKLTAESAAHRNA.

Pyruvate-binding residues include Asp-38 and His-124. Residues Thr-398 and 421 to 423 (GSI) each bind thiamine diphosphate. Residue Asp-451 coordinates Mg(2+). Residues 452 to 453 (GS) and 478 to 483 (NQGYTI) contribute to the thiamine diphosphate site. Residues Asn-478 and Gly-480 each coordinate Mg(2+). Residue Glu-484 coordinates pyruvate.

This sequence belongs to the TPP enzyme family. As to quaternary structure, homotetramer. Requires Mg(2+) as cofactor. Thiamine diphosphate is required as a cofactor.

The enzyme catalyses a 2-oxocarboxylate + H(+) = an aldehyde + CO2. It carries out the reaction pyruvate + H(+) = acetaldehyde + CO2. The protein is Pyruvate decarboxylase (pdcA) of Aspergillus terreus (strain NIH 2624 / FGSC A1156).